Reading from the N-terminus, the 525-residue chain is Bifunctional purine biosynthesis protein PurH (525 aa).

An MGS-like domain is found at 1-149 (MSDPVIKRAL…KNHESVTVIT (149 aa)).

The protein belongs to the PurH family.

The enzyme catalyses (6R)-10-formyltetrahydrofolate + 5-amino-1-(5-phospho-beta-D-ribosyl)imidazole-4-carboxamide = 5-formamido-1-(5-phospho-D-ribosyl)imidazole-4-carboxamide + (6S)-5,6,7,8-tetrahydrofolate. It carries out the reaction IMP + H2O = 5-formamido-1-(5-phospho-D-ribosyl)imidazole-4-carboxamide. Its pathway is purine metabolism; IMP biosynthesis via de novo pathway; 5-formamido-1-(5-phospho-D-ribosyl)imidazole-4-carboxamide from 5-amino-1-(5-phospho-D-ribosyl)imidazole-4-carboxamide (10-formyl THF route): step 1/1. It participates in purine metabolism; IMP biosynthesis via de novo pathway; IMP from 5-formamido-1-(5-phospho-D-ribosyl)imidazole-4-carboxamide: step 1/1. This Chlorobium phaeobacteroides (strain BS1) protein is Bifunctional purine biosynthesis protein PurH.